A 175-amino-acid polypeptide reads, in one-letter code: FMRFamide-like neuropeptides 1 (175 aa).

The signal sequence occupies residues 1–21 (MTLLYQVGLLLLVAATYKVSA). The propeptide occupies 22–68 (ECCTPGATSDFCTVFSMLSTMEQNEVMNFIGENCDGDAEVALQKMEK). Tyr76 carries the tyrosine amide modification. The propeptide occupies 79–86 (SAAVKSLG). Phenylalanine amide is present on residues Phe98, Phe108, Phe120, Phe130, Phe142, and Phe154. Residues 157-165 (SFDNFDRES) constitute a propeptide that is removed on maturation. Phe173 is subject to Phenylalanine amide.

This sequence belongs to the FARP (FMRFamide related peptide) family. May be processed by convertase egl-3. As to expression, each flp gene is expressed in a distinct set of neurons. Flp-1 is expressed in the AVA interneurons, the M5 cholinergic pharyngeal motoneurons, and the AIA, AIY, AVE, AVK, RIG and RMG neurons.

The protein resides in the secreted. In terms of biological role, together with flp-18, plays a homeostatic role by acting on the GABAergic neural transmission at neuromuscular junctions to prevent overexcitation of the locomotor circuit. Its function is as follows. Inhibits the activity of dissected pharyngeal myogenic muscle system. DPNFLRF-amide: Inhibits the activity of dissected pharyngeal myogenic muscle system. Functionally, acts as a ligand for the npr-22 receptor in vitro. The polypeptide is FMRFamide-like neuropeptides 1 (flp-1) (Caenorhabditis elegans).